A 58-amino-acid chain; its full sequence is Keratin-associated protein 19-9b (58 aa).

The segment at 6-52 is 12 X 2 AA repeats of G-[YCGS]; it reads GNYYGGLGYGLGGFGGFGGLGYGYGSSYGLGGYGGYGYFSPSFYGGY.

Belongs to the KRTAP type 19 family. As to quaternary structure, interacts with hair keratins.

Functionally, in the hair cortex, hair keratin intermediate filaments are embedded in an interfilamentous matrix, consisting of hair keratin-associated proteins (KRTAP), which are essential for the formation of a rigid and resistant hair shaft through their extensive disulfide bond cross-linking with abundant cysteine residues of hair keratins. The matrix proteins include the high-sulfur and high-glycine-tyrosine keratins. The protein is Keratin-associated protein 19-9b (Krtap19-9b) of Mus musculus (Mouse).